Consider the following 329-residue polypeptide: D-alanine--D-alanine ligase (329 aa).

The ATP-grasp domain occupies 120-326 (KLWYDALDIP…FHEFLEDCIN (207 aa)). An ATP-binding site is contributed by 150 to 205 (AFEKWGKVFVKAARQGSSVGCYSVAEKQAIAKAVNDAFGYSDQVLVEKAVKPRELE). Residues aspartate 280, glutamate 293, and asparagine 295 each coordinate Mg(2+).

The protein belongs to the D-alanine--D-alanine ligase family. Requires Mg(2+) as cofactor. Mn(2+) serves as cofactor.

It localises to the cytoplasm. It carries out the reaction 2 D-alanine + ATP = D-alanyl-D-alanine + ADP + phosphate + H(+). It functions in the pathway cell wall biogenesis; peptidoglycan biosynthesis. Functionally, cell wall formation. This is D-alanine--D-alanine ligase from Vibrio parahaemolyticus serotype O3:K6 (strain RIMD 2210633).